Here is a 605-residue protein sequence, read N- to C-terminus: Alanine--tRNA ligase (605 aa).

Positions 463, 467, 565, and 569 each coordinate Zn(2+).

This sequence belongs to the class-II aminoacyl-tRNA synthetase family. Requires Zn(2+) as cofactor.

The protein localises to the cytoplasm. The catalysed reaction is tRNA(Ala) + L-alanine + ATP = L-alanyl-tRNA(Ala) + AMP + diphosphate. Functionally, catalyzes the attachment of alanine to tRNA(Ala) in a two-step reaction: alanine is first activated by ATP to form Ala-AMP and then transferred to the acceptor end of tRNA(Ala). Also edits incorrectly charged Ser-tRNA(Ala) and Gly-tRNA(Ala) via its editing domain. The sequence is that of Alanine--tRNA ligase (alaS) from Treponema pallidum (strain Nichols).